The sequence spans 485 residues: Cytosol non-specific dipeptidase (485 aa).

Position 76 (His76) interacts with Zn(2+). Residue Asp78 is part of the active site. Asp115 serves as a coordination point for Zn(2+). The active-site Proton acceptor is the Glu145. The Zn(2+) site is built by Glu146 and Asp169. N6-acetyllysine is present on Lys296. Zn(2+) is bound at residue His457.

Belongs to the peptidase M20C family. The cofactor is Zn(2+). Co(2+) serves as cofactor.

It catalyses the reaction Hydrolysis of dipeptides, preferentially hydrophobic dipeptides including prolyl amino acids.. Inhibited by metal chelators. In terms of biological role, dipeptidase with broad substrate specificity. Requires dipeptide substrates with an unblocked N-terminus and the amino group in the alpha or beta position. Non-protein amino acids and proline are not accepted in the C-terminal position, whereas some dipeptide amides and formyl amino acids are hydrolyzed. Also shows cysteinylglycinase activity, which is sufficient for E.coli to utilize cysteinylglycine as a cysteine source. The protein is Cytosol non-specific dipeptidase (pepD) of Escherichia coli (strain K12).